The sequence spans 447 residues: Tubulin beta chain (447 aa).

8 residues coordinate GTP: glutamine 11, glutamate 69, serine 138, glycine 142, threonine 143, glycine 144, asparagine 204, and asparagine 226. Glutamate 69 serves as a coordination point for Mg(2+). Residues 424–447 form a disordered region; the sequence is QYQEASVSEGEEEYDEEAPLEGEE. The segment covering 432-447 has biased composition (acidic residues); it reads EGEEEYDEEAPLEGEE.

It belongs to the tubulin family. Dimer of alpha and beta chains. A typical microtubule is a hollow water-filled tube with an outer diameter of 25 nm and an inner diameter of 15 nM. Alpha-beta heterodimers associate head-to-tail to form protofilaments running lengthwise along the microtubule wall with the beta-tubulin subunit facing the microtubule plus end conferring a structural polarity. Microtubules usually have 13 protofilaments but different protofilament numbers can be found in some organisms and specialized cells. The cofactor is Mg(2+).

The protein resides in the cytoplasm. It is found in the cytoskeleton. Functionally, tubulin is the major constituent of microtubules, a cylinder consisting of laterally associated linear protofilaments composed of alpha- and beta-tubulin heterodimers. Microtubules grow by the addition of GTP-tubulin dimers to the microtubule end, where a stabilizing cap forms. Below the cap, tubulin dimers are in GDP-bound state, owing to GTPase activity of alpha-tubulin. The chain is Tubulin beta chain (TUB1) from Cercospora beticola (Sugarbeet leaf spot fungus).